The primary structure comprises 43 residues: Mu-conotoxin-like Cal 12.2c (43 aa).

Residue arginine 1 is a propeptide. Cystine bridges form between cysteine 4/cysteine 16, cysteine 11/cysteine 24, cysteine 18/cysteine 29, and cysteine 23/cysteine 35. Tryptophan 31 carries the post-translational modification 6'-bromotryptophan. The residue at position 36 (proline 36) is a 4-hydroxyproline. 6'-bromotryptophan is present on tryptophan 40.

As to expression, expressed by the venom duct.

It localises to the secreted. Functionally, mu-conotoxins block voltage-gated sodium channels. This toxin reversibly blocks voltage-gated sodium channel in cephalopods, with no alteration in the voltage dependence of sodium conductance or on the kinetics of inactivation. This Californiconus californicus (California cone) protein is Mu-conotoxin-like Cal 12.2c.